A 137-amino-acid polypeptide reads, in one-letter code: Nucleoside diphosphate kinase (137 aa).

Residues K10, F59, R87, T93, R104, and N114 each contribute to the ATP site. The Pros-phosphohistidine intermediate role is filled by H117.

Belongs to the NDK family. Homotetramer. Requires Mg(2+) as cofactor.

The protein localises to the cytoplasm. It carries out the reaction a 2'-deoxyribonucleoside 5'-diphosphate + ATP = a 2'-deoxyribonucleoside 5'-triphosphate + ADP. It catalyses the reaction a ribonucleoside 5'-diphosphate + ATP = a ribonucleoside 5'-triphosphate + ADP. Its function is as follows. Major role in the synthesis of nucleoside triphosphates other than ATP. The ATP gamma phosphate is transferred to the NDP beta phosphate via a ping-pong mechanism, using a phosphorylated active-site intermediate. This Streptomyces griseus subsp. griseus (strain JCM 4626 / CBS 651.72 / NBRC 13350 / KCC S-0626 / ISP 5235) protein is Nucleoside diphosphate kinase.